The sequence spans 157 residues: SsrA-binding protein (157 aa).

Residues 126-157 (GLGKGKQAHDKREAVKERDWQRDRARLMRDRG) are disordered. Residues 132-157 (QAHDKREAVKERDWQRDRARLMRDRG) show a composition bias toward basic and acidic residues.

Belongs to the SmpB family.

Its subcellular location is the cytoplasm. Required for rescue of stalled ribosomes mediated by trans-translation. Binds to transfer-messenger RNA (tmRNA), required for stable association of tmRNA with ribosomes. tmRNA and SmpB together mimic tRNA shape, replacing the anticodon stem-loop with SmpB. tmRNA is encoded by the ssrA gene; the 2 termini fold to resemble tRNA(Ala) and it encodes a 'tag peptide', a short internal open reading frame. During trans-translation Ala-aminoacylated tmRNA acts like a tRNA, entering the A-site of stalled ribosomes, displacing the stalled mRNA. The ribosome then switches to translate the ORF on the tmRNA; the nascent peptide is terminated with the 'tag peptide' encoded by the tmRNA and targeted for degradation. The ribosome is freed to recommence translation, which seems to be the essential function of trans-translation. This chain is SsrA-binding protein, found in Methylobacterium radiotolerans (strain ATCC 27329 / DSM 1819 / JCM 2831 / NBRC 15690 / NCIMB 10815 / 0-1).